The primary structure comprises 175 residues: CDP-archaeol synthase (175 aa).

4 helical membrane passes run 41–61 (GLFS…WLSM), 78–98 (YASA…GDMF), 122–142 (FVVG…VSNF), and 150–170 (VLIM…FIGV).

The protein belongs to the CDP-archaeol synthase family. Mg(2+) serves as cofactor.

The protein localises to the cell membrane. It carries out the reaction 2,3-bis-O-(geranylgeranyl)-sn-glycerol 1-phosphate + CTP + H(+) = CDP-2,3-bis-O-(geranylgeranyl)-sn-glycerol + diphosphate. It functions in the pathway membrane lipid metabolism; glycerophospholipid metabolism. Functionally, catalyzes the formation of CDP-2,3-bis-(O-geranylgeranyl)-sn-glycerol (CDP-archaeol) from 2,3-bis-(O-geranylgeranyl)-sn-glycerol 1-phosphate (DGGGP) and CTP. This reaction is the third ether-bond-formation step in the biosynthesis of archaeal membrane lipids. This is CDP-archaeol synthase from Methanosarcina acetivorans (strain ATCC 35395 / DSM 2834 / JCM 12185 / C2A).